The sequence spans 331 residues: Homeobox protein DBX1 (331 aa).

Disordered regions lie at residues 56–94 (RAVPPPSMSPPTSESPNCMSETSDLARREGPNQTSISSN) and 232–331 (KERE…ITVS). The segment at residues 173–232 (GMLRRAVFSDVQRKALEKMFQKQKYISKPDRKKLAGKLGLKDSQVKIWFQNRRMKWRNSK) is a DNA-binding region (homeobox). Residues 256-266 (DLSDVSKKSSG) show a composition bias toward basic and acidic residues. Low complexity predominate over residues 299 to 314 (PSSPFNSSSASKPSDF). Acidic residues predominate over residues 315 to 331 (SDSEEEGGEQEEEITVS).

The protein belongs to the H2.0 homeobox family.

The protein resides in the nucleus. May function within the midpoint progenitor population to inhibit neuronal differentiation, possibly through modulating the function of Xash3. This Xenopus laevis (African clawed frog) protein is Homeobox protein DBX1 (dbx1).